A 2297-amino-acid polypeptide reads, in one-letter code: Serine/threonine-protein kinase WNK2 (2297 aa).

Residues 1-10 are compositionally biased toward basic and acidic residues; sequence MDGDGGRRDV. Disordered stretches follow at residues 1-75 and 89-183; these read MDGD…QRRV and ARGR…EDDL. Omega-N-methylarginine occurs at positions 19 and 30. Ser-45 carries the phosphoserine modification. A compositionally biased stretch (low complexity) spans 92-120; sequence RPAAPAPAALVAQPGAPGAPADAGPEPVG. Residues 142–172 are compositionally biased toward basic and acidic residues; the sequence is GPREEAAATVRKEDEGAAEAKPEPGRTRRDE. The segment covering 173 to 182 has biased composition (acidic residues); the sequence is PEEEEDDEDD. The 259-residue stretch at 195–453 folds into the Protein kinase domain; it reads LKFDIELGRG…IKDLLSHAFF (259 aa). Residues Ser-205, 275–278, and Lys-325 each bind ATP; that span reads TELM. The active-site Proton acceptor is the Asp-342. Phosphoserine; by autocatalysis is present on residues Ser-352 and Ser-356. Residue Ser-560 is modified to Phosphoserine. Disordered stretches follow at residues 579-630, 699-751, 917-1022, 1117-1185, 1262-1297, 1323-1345, 1374-1480, and 1492-1586; these read AQAG…DSQS, FPDP…PVVP, PQMA…PGSQ, PVQE…ERAS, SEDT…SQAN, APEA…ASQG, SAQS…HEAP, and PCTP…DSTI. A compositionally biased stretch (polar residues) spans 604 to 625; the sequence is PTSATSLASDSTFDSGQGSTVY. Composition is skewed to pro residues over residues 709–740 and 939–1007; these read VLPP…PTPL and PPQP…PLQP. Ser-1150 is modified (phosphoserine). The span at 1167-1178 shows a compositional bias: basic residues; the sequence is ARKHHRRSTRAR. Ser-1262 is subject to Phosphoserine. A compositionally biased stretch (polar residues) spans 1392–1406; it reads SKEQPSFLASQQLLS. The span at 1411-1426 shows a compositional bias: pro residues; that stretch reads SNPPGAPPAPLAPSSP. Composition is skewed to polar residues over residues 1439–1453 and 1461–1473; these read ATST…TASQ and QGLT…SQPL. Residues 1510-1520 are compositionally biased toward pro residues; sequence EPLPPPAPEPS. Residues 1526-1544 show a composition bias toward low complexity; that stretch reads PQPALGQPAPLLPAAVGAV. Pro residues predominate over residues 1552–1565; it reads PSPPLGPTVPPQPP. Ser-1588 carries the post-translational modification Phosphoserine. Residues 1621–1631 are compositionally biased toward basic and acidic residues; it reads TLEPLRGDQPR. A disordered region spans residues 1621–1865; the sequence is TLEPLRGDQP…PVQKQASLPV (245 aa). Over residues 1675–1688 the composition is skewed to polar residues; the sequence is QGTSSSMTAESSPR. Ser-1685 carries the phosphoserine modification. Positions 1721 to 1731 are enriched in basic and acidic residues; sequence ARVEPTDRDGG. Phosphoserine occurs at positions 1736, 1817, 1818, 1862, and 1889. 2 disordered regions span residues 1970-1990 and 2011-2031; these read NVGF…SKSK and TGHL…QASV. Residues 1981 to 1990 are compositionally biased toward basic residues; it reads GRRRKTSKSK. A Phosphoserine modification is found at Ser-2067. Disordered stretches follow at residues 2123 to 2142 and 2269 to 2297; these read SRSS…QPAL and CCGH…PVRS. Over residues 2272–2289 the composition is skewed to polar residues; that stretch reads HSTQPRGGQRVGSKTASF.

Belongs to the protein kinase superfamily. Ser/Thr protein kinase family. WNK subfamily. Forms a complex with the phosphorylated form of STK39. Requires Mg(2+) as cofactor. In terms of processing, autophosphorylated. Autophosphorylation at Ser-352 and Ser-356 promotes its activity. Expressed in various cancer cell lines (at protein level). Predominantly expressed in heart, brain, skeletal muscle and colon.

Its subcellular location is the cytoplasm. It localises to the cell membrane. The catalysed reaction is L-seryl-[protein] + ATP = O-phospho-L-seryl-[protein] + ADP + H(+). It catalyses the reaction L-threonyl-[protein] + ATP = O-phospho-L-threonyl-[protein] + ADP + H(+). Its activity is regulated as follows. Activation requires autophosphorylation of Ser-356 and, to a lower extent, Ser-352. In terms of biological role, serine/threonine-protein kinase component of the WNK2-SPAK/OSR1 kinase cascade, which plays an important role in the regulation of electrolyte homeostasis, cell signaling, survival, and proliferation. The WNK2-SPAK/OSR1 kinase cascade is composed of WNK2, which mediates phosphorylation and activation of downstream kinases OXSR1/OSR1 and STK39/SPAK. Following activation, OXSR1/OSR1 and STK39/SPAK catalyze phosphorylation of ion cotransporters, regulating their activity. Acts as an activator and inhibitor of sodium-coupled chloride cotransporters and potassium-coupled chloride cotransporters respectively. Activates SLC12A2, SCNN1A, SCNN1B, SCNN1D and SGK1 and inhibits SLC12A5. Negatively regulates the EGF-induced activation of the ERK/MAPK-pathway and the downstream cell cycle progression. Affects MAPK3/MAPK1 activity by modulating the activity of MAP2K1 and this modulation depends on phosphorylation of MAP2K1 by PAK1. WNK2 acts by interfering with the activity of PAK1 by controlling the balance of the activity of upstream regulators of PAK1 activity, RHOA and RAC1, which display reciprocal activity. The polypeptide is Serine/threonine-protein kinase WNK2 (Homo sapiens (Human)).